A 423-amino-acid chain; its full sequence is Peroxisome biogenesis factor 2 (423 aa).

The span at 1 to 26 (MVDNYNNNNILPTNTSTTTTTNTTIT) shows a compositional bias: low complexity. Residues 1–46 (MVDNYNNNNILPTNTSTTTTTNTTITPTPPLPPPPPISNILDNNNN) form a disordered region. Over 1–109 (MVDNYNNNNI…NIKRPSTSIV (109 aa)) the chain is Peroxisomal matrix. The span at 27 to 37 (PTPPLPPPPPI) shows a compositional bias: pro residues. Residues 110–136 (RVSQLDSARLDEEILDLLRSQFMKIFT) traverse the membrane as a helical segment. Residues 137–142 (FFKPNF) are Cytoplasmic-facing. A helical membrane pass occupies residues 143–168 (IHNFQPEINLVLKSVIYKLSIFNLGT). Residues 169–197 (TYGNQLQNLTYRNEKAFDPIRGSDQLNKL) lie on the Peroxisomal matrix side of the membrane. Residues 198-224 (TMRQKWLSGLINIGGEWLWTRINRYLI) form a helical membrane-spanning segment. The Cytoplasmic portion of the chain corresponds to 225 to 234 (NNNWSEHPPN). Residues 235 to 265 (DIRKKFWNFLNFAESAYKALALLNFLTFLFN) traverse the membrane as a helical segment. The Peroxisomal matrix segment spans residues 266–292 (GKYVTLVNRILHMRLVYAHPTLSRNIS). A helical membrane pass occupies residues 293–316 (FEYMNRLLVWHGFTEFILFIMPLI). Residues 317-423 (NIDRIKSFLY…SNIKRFSIQD (107 aa)) are Cytoplasmic-facing. Zn(2+)-binding residues include Cys369, Cys372, Cys385, His387, Cys390, Cys393, Cys406, and Cys409. Residues 369–410 (CPICMNDPISMPYSADCGHLFCYYCIKTSCMIDSSFTCPRCN) form an RING-type zinc finger.

Belongs to the pex2/pex10/pex12 family. In terms of assembly, component of the PEX2-PEX10-PEX12 retrotranslocation channel.

Its subcellular location is the peroxisome membrane. The catalysed reaction is [E2 ubiquitin-conjugating enzyme]-S-ubiquitinyl-L-cysteine + [acceptor protein]-L-cysteine = [E2 ubiquitin-conjugating enzyme]-L-cysteine + [acceptor protein]-S-ubiquitinyl-L-cysteine.. The protein operates within protein modification; protein ubiquitination. In terms of biological role, E3 ubiquitin-protein ligase component of a retrotranslocation channel required for peroxisome organization by mediating export of the PEX5 receptor from peroxisomes to the cytosol, thereby promoting PEX5 recycling. The retrotranslocation channel is composed of PEX2, PEX10 and PEX12; each subunit contributing transmembrane segments that coassemble into an open channel that specifically allows the passage of PEX5 through the peroxisomal membrane. PEX2 also regulates peroxisome organization by acting as a E3 ubiquitin-protein ligase. PEX2 ubiquitinates PEX5 during its passage through the retrotranslocation channel: catalyzes monoubiquitination of PEX5 at 'Cys-11', a modification that acts as a signal for PEX5 extraction into the cytosol. This Dictyostelium discoideum (Social amoeba) protein is Peroxisome biogenesis factor 2 (pex2).